Consider the following 157-residue polypeptide: Protein FAM218A (157 aa).

Residues 104–127 are disordered; that stretch reads PAVTPPKLPGHSKSEGPPGKVRKR.

The polypeptide is Protein FAM218A (FAM218A) (Homo sapiens (Human)).